Here is a 74-residue protein sequence, read N- to C-terminus: Alpha-conotoxin GeXIVA (74 aa).

The N-terminal stretch at 1–22 (MKLTCVLIITVLFLTACQLTTA) is a signal peptide. A propeptide spanning residues 23 to 46 (VTYSRGEHKHRALMSTGTNYRLPK) is cleaved from the precursor. Residues 56–64 (RSPYDRRRR) are interacts with alpha-9-alpha-10 (CHRNA9-CHRNA10) nAChR.

Belongs to the conotoxin O1 superfamily. Post-translationally, the native disulfide bond pairing has not been studied. Three isomers may exist: the bead isomer (I-II; III-IV), the globular isomer (I-III; II-IV), the ribbon isomer (I-IV; II-III). They have all been synthesized and their activity tested. All of them show similar potency on alpha-9-alpha-10 (CHRNA9-CHRNA10) nAChR, showing that disulfide bonds does not significantly affect their activity. In addition, removal of disulfide bonds does not affect the activity on alpha-9-alpha-10 (CHRNA9-CHRNA10) nAChR either. In terms of tissue distribution, expressed by the venom duct.

Its subcellular location is the secreted. Its function is as follows. Alpha-conotoxins act on postsynaptic membranes, they bind to the nicotinic acetylcholine receptors (nAChR) and thus inhibit them. This toxin is very potent on alpha-9-alpha-10/CHRNA9-CHRNA10 nAChR (IC(50)=4.61-12 nM for the bead isomer (I-II; III-IV), IC(50)=7-16 nM for the ribbon isomer (I-IV; II-III) and IC(50)=22.7 nM for the globular isomer (I-III; II-IV)). The bead isomer also shows a weak inhibition on other nAChRs (alpha-1-beta-1-delta-epsilon/CHRNA1-CHRNB1-CHRND-CHRNE, alpha-7/CHRNA7, alpha-6/alpha-3-beta-2-beta-3 (CHRNA6/CHRNA3-CHRNB2-CHRNB3), alpha-3-beta-2/CHRNA3-CHRNB2, alpha-2-beta-2/CHRNA2-CHRNB2, alpha-6/alpha-3-beta-4 (CHRNA6/CHRNA3-CHRNB4), alpha-4-beta-2/CHRNA4-CHRNB2, alpha-4-beta-4/CHRNA4-CHRNB4, alpha-2-beta-4/CHRNA2-CHRNB4, alpha-3-beta-4/CHRNA3-CHRNB4). The toxin blockade is voltage-dependent, and its binding site does not overlap with the binding site of the competitive antagonist alpha-conotoxin RgIA. The toxin inhibits Sf9 cell growth. Both the bead and ribbon isomers relieve pain effects in the rat chronic constriction injury (CCI) model of neuropathic pain, and in the acute pain model of tail flick test, but have no effect on motor performance. This chain is Alpha-conotoxin GeXIVA, found in Conus generalis (General cone).